The following is a 138-amino-acid chain: Large ribosomal subunit protein bL17 (138 aa).

This sequence belongs to the bacterial ribosomal protein bL17 family. Part of the 50S ribosomal subunit. Contacts protein L32.

In Granulibacter bethesdensis (strain ATCC BAA-1260 / CGDNIH1), this protein is Large ribosomal subunit protein bL17.